The sequence spans 885 residues: DNA mismatch repair protein MutS (885 aa).

626–633 (GPNMGGKS) provides a ligand contact to ATP.

Belongs to the DNA mismatch repair MutS family.

In terms of biological role, this protein is involved in the repair of mismatches in DNA. It is possible that it carries out the mismatch recognition step. This protein has a weak ATPase activity. In Burkholderia ambifaria (strain MC40-6), this protein is DNA mismatch repair protein MutS.